A 269-amino-acid chain; its full sequence is Formamidopyrimidine-DNA glycosylase (269 aa).

Pro2 acts as the Schiff-base intermediate with DNA in catalysis. The Proton donor role is filled by Glu3. The active-site Proton donor; for beta-elimination activity is Lys57. DNA-binding residues include His90, Arg109, and Lys150. Residues 235 to 269 (QVYGRKGEPCRVCGTPIVATKHAQRATFYCRQCQK) form an FPG-type zinc finger. The active-site Proton donor; for delta-elimination activity is the Arg259.

The protein belongs to the FPG family. In terms of assembly, monomer. Zn(2+) serves as cofactor.

The enzyme catalyses Hydrolysis of DNA containing ring-opened 7-methylguanine residues, releasing 2,6-diamino-4-hydroxy-5-(N-methyl)formamidopyrimidine.. It carries out the reaction 2'-deoxyribonucleotide-(2'-deoxyribose 5'-phosphate)-2'-deoxyribonucleotide-DNA = a 3'-end 2'-deoxyribonucleotide-(2,3-dehydro-2,3-deoxyribose 5'-phosphate)-DNA + a 5'-end 5'-phospho-2'-deoxyribonucleoside-DNA + H(+). Involved in base excision repair of DNA damaged by oxidation or by mutagenic agents. Acts as a DNA glycosylase that recognizes and removes damaged bases. Has a preference for oxidized purines, such as 7,8-dihydro-8-oxoguanine (8-oxoG). Has AP (apurinic/apyrimidinic) lyase activity and introduces nicks in the DNA strand. Cleaves the DNA backbone by beta-delta elimination to generate a single-strand break at the site of the removed base with both 3'- and 5'-phosphates. In Escherichia coli O157:H7, this protein is Formamidopyrimidine-DNA glycosylase.